We begin with the raw amino-acid sequence, 741 residues long: Ethylene receptor (741 aa).

3 consecutive transmembrane segments (helical) span residues I23–V43, W53–L73, and V92–L112. Cu cation-binding residues include C65 and H69. Positions D158–L307 constitute a GAF domain. The Histidine kinase domain maps to V350 to E589. H353 is modified (phosphohistidine; by autocatalysis). The region spanning K615–L732 is the Response regulatory domain. D663 carries the 4-aspartylphosphate modification.

This sequence belongs to the ethylene receptor family. As to quaternary structure, homodimer; disulfide-linked. It depends on Cu cation as a cofactor. Activation probably requires a transfer of a phosphate group between a His in the transmitter domain and an Asp of the receiver domain.

It localises to the endoplasmic reticulum membrane. The catalysed reaction is ATP + protein L-histidine = ADP + protein N-phospho-L-histidine.. Functionally, may act early in the ethylene signal transduction pathway, possibly as an ethylene receptor, or as a regulator of the pathway. This is Ethylene receptor (ETR1) from Malus domestica (Apple).